We begin with the raw amino-acid sequence, 586 residues long: Asparagine synthetase [glutamine-hydrolyzing] (586 aa).

Catalysis depends on C2, which acts as the For GATase activity. The Glutamine amidotransferase type-2 domain occupies C2–G185. L-glutamine is bound by residues R50 to I54, N75 to E77, and D98. Positions P193–P516 constitute an Asparagine synthetase domain. Residues L231, I267, and S341–G342 contribute to the ATP site.

The catalysed reaction is L-aspartate + L-glutamine + ATP + H2O = L-asparagine + L-glutamate + AMP + diphosphate + H(+). The protein operates within amino-acid biosynthesis; L-asparagine biosynthesis; L-asparagine from L-aspartate (L-Gln route): step 1/1. Essential for nitrogen assimilation, distribution and remobilization within the plant via the phloem. The chain is Asparagine synthetase [glutamine-hydrolyzing] (ASN1) from Zea mays (Maize).